Here is a 374-residue protein sequence, read N- to C-terminus: Queuine tRNA-ribosyltransferase (374 aa).

Asp89 functions as the Proton acceptor in the catalytic mechanism. Substrate is bound by residues 89–93 (DSGGF), Asp143, Gln187, and Gly214. The segment at 245–251 (GVGKPED) is RNA binding. Residue Asp264 is the Nucleophile of the active site. Positions 269 to 273 (TRNAR) are RNA binding; important for wobble base 34 recognition. Zn(2+)-binding residues include Cys302, Cys304, Cys307, and His333.

It belongs to the queuine tRNA-ribosyltransferase family. In terms of assembly, homodimer. Within each dimer, one monomer is responsible for RNA recognition and catalysis, while the other monomer binds to the replacement base PreQ1. Requires Zn(2+) as cofactor.

The enzyme catalyses 7-aminomethyl-7-carbaguanine + guanosine(34) in tRNA = 7-aminomethyl-7-carbaguanosine(34) in tRNA + guanine. It functions in the pathway tRNA modification; tRNA-queuosine biosynthesis. Functionally, catalyzes the base-exchange of a guanine (G) residue with the queuine precursor 7-aminomethyl-7-deazaguanine (PreQ1) at position 34 (anticodon wobble position) in tRNAs with GU(N) anticodons (tRNA-Asp, -Asn, -His and -Tyr). Catalysis occurs through a double-displacement mechanism. The nucleophile active site attacks the C1' of nucleotide 34 to detach the guanine base from the RNA, forming a covalent enzyme-RNA intermediate. The proton acceptor active site deprotonates the incoming PreQ1, allowing a nucleophilic attack on the C1' of the ribose to form the product. After dissociation, two additional enzymatic reactions on the tRNA convert PreQ1 to queuine (Q), resulting in the hypermodified nucleoside queuosine (7-(((4,5-cis-dihydroxy-2-cyclopenten-1-yl)amino)methyl)-7-deazaguanosine). In Shewanella sp. (strain W3-18-1), this protein is Queuine tRNA-ribosyltransferase.